The primary structure comprises 127 residues: Small ribosomal subunit protein uS11 (127 aa).

Belongs to the universal ribosomal protein uS11 family. Part of the 30S ribosomal subunit. Interacts with proteins S7 and S18. Binds to IF-3.

Located on the platform of the 30S subunit, it bridges several disparate RNA helices of the 16S rRNA. Forms part of the Shine-Dalgarno cleft in the 70S ribosome. This chain is Small ribosomal subunit protein uS11, found in Streptococcus pyogenes serotype M49 (strain NZ131).